Reading from the N-terminus, the 1023-residue chain is Cell division cycle-associated protein 2 (1023 aa).

Positions 1–14 (MDANSKDKPPETKE) are enriched in basic and acidic residues. The disordered stretch occupies residues 1 to 21 (MDANSKDKPPETKESAMNNAG). 7 positions are modified to phosphoserine: Ser98, Ser120, Ser126, Ser131, Ser210, Ser291, and Ser309. Thr312 is subject to Phosphothreonine. The PP1-binding domain occupies 389-449 (KRKRVTFGED…PEPLPQPDFD (61 aa)). A phosphoserine mark is found at Ser400 and Ser407. Thr412 carries the phosphothreonine modification. A Phosphoserine modification is found at Ser437. Residues 542–580 (SQETKCTKRALPKKSQVLKSCRKKKGKGKKSVQKSLYGE) are disordered. The span at 561–573 (SCRKKKGKGKKSV) shows a compositional bias: basic residues. 2 positions are modified to phosphoserine: Ser591 and Ser614. The disordered stretch occupies residues 667 to 729 (SSLGNATSDE…ERVASDSPKP (63 aa)). A compositionally biased stretch (low complexity) spans 679-691 (NTNIMNINENKNI). The span at 696-706 (NKSESENEPKA) shows a compositional bias: basic and acidic residues. Residues Ser710 and Ser756 each carry the phosphoserine modification. Lys762 is covalently cross-linked (Glycyl lysine isopeptide (Lys-Gly) (interchain with G-Cter in SUMO2)). The segment covering 803 to 816 (ESKSQSEDLGRKPM) has biased composition (basic and acidic residues). Disordered stretches follow at residues 803 to 860 (ESKS…GSSV) and 936 to 1023 (SPIK…ERKQ). 2 positions are modified to phosphoserine: Ser936 and Ser977. 2 stretches are compositionally biased toward polar residues: residues 979 to 992 (CIST…TSQF) and 1000 to 1010 (SLNGKGESSLT). Ser1000 is subject to Phosphoserine. Residues 1013–1023 (ERIEHNGERKQ) show a composition bias toward basic and acidic residues.

As to quaternary structure, interacts with PPP1CC. Phosphorylated by CDK1. May regulate its subcellular location. In terms of tissue distribution, ubiquitously expressed.

The protein resides in the nucleus. Regulator of chromosome structure during mitosis required for condensin-depleted chromosomes to retain their compact architecture through anaphase. Acts by mediating the recruitment of phopsphatase PP1-gamma subunit (PPP1CC) to chromatin at anaphase and into the following interphase. At anaphase onset, its association with chromatin targets a pool of PPP1CC to dephosphorylate substrates. The chain is Cell division cycle-associated protein 2 (CDCA2) from Homo sapiens (Human).